Consider the following 1703-residue polypeptide: Gingipain R1 (1703 aa).

An N-terminal signal peptide occupies residues 1-20 (MNKFVSIALCSSLLGGMAFA). A propeptide spanning residues 21 to 224 (QQTELGRNPN…RMFMNYEPGR (204 aa)) is cleaved from the precursor. Asp-302, Val-324, Asp-327, Tyr-329, Glu-331, Glu-385, and His-390 together coordinate Ca(2+). His-435 serves as the catalytic Proton donor. Residue Cys-468 is the Nucleophile of the active site. Ca(2+) contacts are provided by Phe-473, Glu-482, Asp-516, Glu-517, Glu-520, and His-526. Residues 940–968 (WDAPNGTPNPNPNPNPNPNPGTTTLSESF) are disordered. Pro residues predominate over residues 946–958 (TPNPNPNPNPNPN).

It belongs to the peptidase C25 family.

It is found in the secreted. The catalysed reaction is Hydrolysis of proteins and small molecule substrates, with a preference for Arg in P1.. In terms of biological role, thiol protease. Acts synergistically with RgpB to catalyze the maturation of fimbrial subunits, such as FimA. Its proteolytic activity is a major factor in both periodontal tissue destruction and in evasion of host defense mechanisms. The polypeptide is Gingipain R1 (Porphyromonas gingivalis (strain ATCC 33277 / DSM 20709 / CIP 103683 / JCM 12257 / NCTC 11834 / 2561)).